The following is a 257-amino-acid chain: Phosphatidylglycerol--prolipoprotein diacylglyceryl transferase (257 aa).

Transmembrane regions (helical) follow at residues 12 to 32 (FSIR…VYLA), 49 to 69 (FILM…VIFE), 83 to 103 (IWNG…LLVI), and 109 to 129 (LINP…AQAI). Residue Arg131 participates in a 1,2-diacyl-sn-glycero-3-phospho-(1'-sn-glycerol) binding. The next 3 membrane-spanning stretches (helical) occupy residues 167 to 187 (VPTF…IMSI), 197 to 217 (GEVA…IEGM), and 226 to 246 (GLRV…VMII).

It belongs to the Lgt family.

The protein localises to the cell membrane. The catalysed reaction is L-cysteinyl-[prolipoprotein] + a 1,2-diacyl-sn-glycero-3-phospho-(1'-sn-glycerol) = an S-1,2-diacyl-sn-glyceryl-L-cysteinyl-[prolipoprotein] + sn-glycerol 1-phosphate + H(+). The protein operates within protein modification; lipoprotein biosynthesis (diacylglyceryl transfer). Functionally, catalyzes the transfer of the diacylglyceryl group from phosphatidylglycerol to the sulfhydryl group of the N-terminal cysteine of a prolipoprotein, the first step in the formation of mature lipoproteins. In Streptococcus agalactiae serotype Ia (strain ATCC 27591 / A909 / CDC SS700), this protein is Phosphatidylglycerol--prolipoprotein diacylglyceryl transferase.